Consider the following 379-residue polypeptide: UDP-N-acetylglucosamine--N-acetylmuramyl-(pentapeptide) pyrophosphoryl-undecaprenol N-acetylglucosamine transferase (379 aa).

UDP-N-acetyl-alpha-D-glucosamine is bound by residues 17-19, N128, R169, S197, and Q298; that span reads TGG.

Belongs to the glycosyltransferase 28 family. MurG subfamily.

It is found in the cell inner membrane. The enzyme catalyses di-trans,octa-cis-undecaprenyl diphospho-N-acetyl-alpha-D-muramoyl-L-alanyl-D-glutamyl-meso-2,6-diaminopimeloyl-D-alanyl-D-alanine + UDP-N-acetyl-alpha-D-glucosamine = di-trans,octa-cis-undecaprenyl diphospho-[N-acetyl-alpha-D-glucosaminyl-(1-&gt;4)]-N-acetyl-alpha-D-muramoyl-L-alanyl-D-glutamyl-meso-2,6-diaminopimeloyl-D-alanyl-D-alanine + UDP + H(+). It functions in the pathway cell wall biogenesis; peptidoglycan biosynthesis. Cell wall formation. Catalyzes the transfer of a GlcNAc subunit on undecaprenyl-pyrophosphoryl-MurNAc-pentapeptide (lipid intermediate I) to form undecaprenyl-pyrophosphoryl-MurNAc-(pentapeptide)GlcNAc (lipid intermediate II). The polypeptide is UDP-N-acetylglucosamine--N-acetylmuramyl-(pentapeptide) pyrophosphoryl-undecaprenol N-acetylglucosamine transferase (Brucella abortus (strain S19)).